Consider the following 324-residue polypeptide: Methionyl-tRNA formyltransferase (324 aa).

(6S)-5,6,7,8-tetrahydrofolate is bound at residue serine 112–proline 115.

Belongs to the Fmt family.

It carries out the reaction L-methionyl-tRNA(fMet) + (6R)-10-formyltetrahydrofolate = N-formyl-L-methionyl-tRNA(fMet) + (6S)-5,6,7,8-tetrahydrofolate + H(+). Attaches a formyl group to the free amino group of methionyl-tRNA(fMet). The formyl group appears to play a dual role in the initiator identity of N-formylmethionyl-tRNA by promoting its recognition by IF2 and preventing the misappropriation of this tRNA by the elongation apparatus. The sequence is that of Methionyl-tRNA formyltransferase from Shewanella loihica (strain ATCC BAA-1088 / PV-4).